Consider the following 157-residue polypeptide: Phosphomannomutase (157 aa).

Serine 98 (phosphoserine intermediate) is an active-site residue. Position 98 (serine 98) interacts with Mg(2+).

The protein belongs to the phosphohexose mutase family. Mg(2+) is required as a cofactor.

The catalysed reaction is alpha-D-mannose 1-phosphate = D-mannose 6-phosphate. It functions in the pathway nucleotide-sugar biosynthesis; GDP-alpha-D-mannose biosynthesis; alpha-D-mannose 1-phosphate from D-fructose 6-phosphate: step 2/2. The protein operates within capsule biogenesis; capsule polysaccharide biosynthesis. Functionally, involved in the biosynthesis of the K2 capsular polysaccharide biosynthesis. The protein is Phosphomannomutase (manB) of Klebsiella pneumoniae.